The following is a 406-amino-acid chain: NADH-quinone oxidoreductase subunit D (406 aa).

It belongs to the complex I 49 kDa subunit family. In terms of assembly, NDH-1 is composed of 14 different subunits. Subunits NuoB, C, D, E, F, and G constitute the peripheral sector of the complex.

The protein resides in the cell inner membrane. The enzyme catalyses a quinone + NADH + 5 H(+)(in) = a quinol + NAD(+) + 4 H(+)(out). NDH-1 shuttles electrons from NADH, via FMN and iron-sulfur (Fe-S) centers, to quinones in the respiratory chain. The immediate electron acceptor for the enzyme in this species is believed to be ubiquinone. Couples the redox reaction to proton translocation (for every two electrons transferred, four hydrogen ions are translocated across the cytoplasmic membrane), and thus conserves the redox energy in a proton gradient. The polypeptide is NADH-quinone oxidoreductase subunit D (Leptospira biflexa serovar Patoc (strain Patoc 1 / Ames)).